A 607-amino-acid chain; its full sequence is Arginine--tRNA ligase, cytoplasmic (607 aa).

Position 2 is an N-acetylalanine (A2). S15 carries the post-translational modification Phosphoserine. Interaction with tRNA stretches follow at residues 59 to 60 (EW) and 106 to 111 (NGPFIQ). L-arginine contacts are provided by residues 148–153 (EFSSPN), H162, Y347, D351, and Q375. Residues 151-162 (SPNIAKPFHAGH) carry the 'HIGH' region motif. Positions 484–498 (DTGPYLQYAHSRLRS) are interaction with tRNA.

The protein belongs to the class-I aminoacyl-tRNA synthetase family. Monomer.

It is found in the cytoplasm. It localises to the cytosol. The catalysed reaction is tRNA(Arg) + L-arginine + ATP = L-arginyl-tRNA(Arg) + AMP + diphosphate. In terms of biological role, forms part of a macromolecular complex that catalyzes the attachment of specific amino acids to cognate tRNAs during protein synthesis. The protein is Arginine--tRNA ligase, cytoplasmic of Saccharomyces cerevisiae (strain ATCC 204508 / S288c) (Baker's yeast).